The following is a 347-amino-acid chain: uncharacterized protein (347 aa).

10 helical membrane passes run Phe-15–Leu-35, Val-46–Val-66, Val-84–Ile-104, Phe-111–Val-131, Gly-149–Pro-169, Ile-182–Ile-202, Ala-214–Ile-234, Phe-249–Ile-269, Ala-283–Val-303, and Ile-312–Ile-332.

It belongs to the tellurite-resistance/dicarboxylate transporter (TDT) family.

It localises to the cell membrane. This is an uncharacterized protein from Methanocaldococcus jannaschii (strain ATCC 43067 / DSM 2661 / JAL-1 / JCM 10045 / NBRC 100440) (Methanococcus jannaschii).